A 418-amino-acid chain; its full sequence is Serine--tRNA ligase (418 aa).

226–228 lines the L-serine pocket; it reads TSE. ATP-binding positions include 257–259 and Val273; that span reads RRE. L-serine is bound at residue Glu280. Residue 344–347 coordinates ATP; that stretch reads ELTS. Thr379 lines the L-serine pocket.

Belongs to the class-II aminoacyl-tRNA synthetase family. Type-1 seryl-tRNA synthetase subfamily. In terms of assembly, homodimer. The tRNA molecule binds across the dimer.

The protein resides in the cytoplasm. The enzyme catalyses tRNA(Ser) + L-serine + ATP = L-seryl-tRNA(Ser) + AMP + diphosphate + H(+). It catalyses the reaction tRNA(Sec) + L-serine + ATP = L-seryl-tRNA(Sec) + AMP + diphosphate + H(+). It functions in the pathway aminoacyl-tRNA biosynthesis; selenocysteinyl-tRNA(Sec) biosynthesis; L-seryl-tRNA(Sec) from L-serine and tRNA(Sec): step 1/1. Functionally, catalyzes the attachment of serine to tRNA(Ser). Is also able to aminoacylate tRNA(Sec) with serine, to form the misacylated tRNA L-seryl-tRNA(Sec), which will be further converted into selenocysteinyl-tRNA(Sec). The sequence is that of Serine--tRNA ligase from Mycobacteroides abscessus (strain ATCC 19977 / DSM 44196 / CCUG 20993 / CIP 104536 / JCM 13569 / NCTC 13031 / TMC 1543 / L948) (Mycobacterium abscessus).